The chain runs to 448 residues: Death-associated protein kinase 3 (448 aa).

Positions 13-275 (YEMGEELGSG…IAQSLEHSWI (263 aa)) constitute a Protein kinase domain. Residues 19–27 (LGSGQFAIV) and K42 each bind ATP. D139 functions as the Proton acceptor in the catalytic mechanism. The tract at residues 161-204 (DFGIAHRIEAGSEFKNIFGTPEFVAPEIVNYEPLGLEADMWSIG) is activation segment. Phosphothreonine is present on residues T180 and T225. T265 carries the post-translational modification Phosphothreonine; by autocatalysis. T265 carries the post-translational modification Phosphothreonine; by ROCK1. S304 bears the Phosphoserine; by DAPK1 mark. Position 306 is a phosphoserine; by autocatalysis and DAPK1 (S306). Phosphoserine; by DAPK1 is present on residues S307, S313, and S321. The interaction with CDC5L stretch occupies residues 390–448 (AQEEARAALLGAGGLKRRLCRLENRYDALAAQVAAEVQFVRDLVRALEQERLQAECGVR). A leucine-zipper region spans residues 422-436 (VAAEVQFVRDLVRAL).

Belongs to the protein kinase superfamily. CAMK Ser/Thr protein kinase family. DAP kinase subfamily. As to quaternary structure, homooligomer in its kinase-active form (homotrimers and homodimers are reported); monomeric in its kinase-inactive form. Homodimerization is required for activation segment autophosphorylation. Interacts with DAXX, PAWR, ATF4, NLK, TCF7L2, UBE2D1, UBE2D2, UBE2D3, and CDC5L. Interacts with AR; enhanced by AATF. Interacts with LUZP1; the interaction is likely to occur throughout the cell cycle and reduces the LUZP1-mediated suppression of MYL9 phosphorylation. Requires Mg(2+) as cofactor. Post-translationally, ubiquitinated. Ubiquitination mediated by the UBE2D3 E3 ligase does not lead to proteasomal degradation, but influences promyelocytic leukemia protein nuclear bodies (PML-NBs) formation in the nucleus. In terms of processing, the phosphorylation status is critical for kinase activity, oligomerization and intracellular localization. Phosphorylation at Thr-180, Thr-225 and Thr-265 is essential for activity. The phosphorylated form is localized in the cytoplasm and nuclear translocation or retention is maximal when it is not phosphorylated. Phosphorylation increases the trimeric form, and its dephosphorylation favors a kinase-inactive monomeric form. In terms of tissue distribution, highly expressed in heart, brain, lung, skeletal muscle, kidney and testis. Lower levels in liver and spleen.

Its subcellular location is the nucleus. The protein resides in the PML body. It localises to the cytoplasm. It is found in the cytoskeleton. The protein localises to the microtubule organizing center. Its subcellular location is the centrosome. The protein resides in the chromosome. It localises to the centromere. It is found in the spindle. The protein localises to the midbody. It catalyses the reaction L-seryl-[protein] + ATP = O-phospho-L-seryl-[protein] + ADP + H(+). The catalysed reaction is L-threonyl-[protein] + ATP = O-phospho-L-threonyl-[protein] + ADP + H(+). A sequential activation is proposed: autophosphorylation at consensus sites is leading to dimerization of the catalytic domain and activation segment exchange (producing an active confirmation of both kinase modules in trans) followed by phosphorylation at Thr-180 in the activation segment and at other regulatory sites. Phosphorylation at Thr-180, Thr-225 and Thr-265 is essential for activity. Inhibited by pyridone 6 (K00225), a potent, ATP-competitive inhibitor. Phosphorylation at Thr-180, Thr-225 and Thr-265 is essential for activity. In terms of biological role, serine/threonine kinase which is involved in the regulation of apoptosis, autophagy, transcription, translation and actin cytoskeleton reorganization. Regulates both type I (caspase-dependent) apoptotic and type II (caspase-independent) autophagic cell deaths signal, depending on the cellular setting. Involved in formation of promyelocytic leukemia protein nuclear body (PML-NB). Involved in apoptosis involving PAWR which mediates cytoplasmic relocation; in vitro phosphorylates PAWR. Regulates myosin phosphorylation in both smooth muscle and non-muscle cells. In smooth muscle, regulates myosin either directly by phosphorylating MYL12B and MYL9 or through inhibition of smooth muscle myosin phosphatase (SMPP1M) via phosphorylation of PPP1R12A; the inhibition of SMPP1M functions to enhance muscle responsiveness to Ca(2+) and promote a contractile state. Phosphorylates MYL12B in non-muscle cells leading to reorganization of actin cytoskeleton such as in regulation of cell polarity and cell migration. Positively regulates canonical Wnt/beta-catenin signaling through interaction with NLK and TCF7L2; disrupts the NLK-TCF7L2 complex thereby influencing the phosphorylation of TCF7L2 by NLK. Phosphorylates STAT3 and enhances its transcriptional activity. Enhances transcription from AR-responsive promoters in a hormone- and kinase-dependent manner. Phosphorylates histone H3 on 'Thr-11' at centromeres during mitosis. Phosphorylates RPL13A on 'Ser-77' upon interferon-gamma activation which is causing RPL13A release from the ribosome, RPL13A association with the GAIT complex and its subsequent involvement in transcript-selective translation inhibition. This is Death-associated protein kinase 3 (Dapk3) from Mus musculus (Mouse).